The sequence spans 134 residues: Syncollin (134 aa).

Positions 1–21 are cleaved as a signal peptide; that stretch reads MSPLRPLLLALALASVPCAQG.

As to quaternary structure, monomer and homooligomer; most probably hexameric. Interacts with GP2. In terms of processing, contains intrachain disulfide bonds.

The protein localises to the zymogen granule membrane. The protein resides in the zymogen granule lumen. Its function is as follows. Functions in exocytosis in pancreatic acinar cells regulating the fusion of zymogen granules with each other. May have a pore-forming activity on membranes and regulate exocytosis in other exocrine tissues. The sequence is that of Syncollin (SYCN) from Homo sapiens (Human).